The chain runs to 177 residues: Large ribosomal subunit protein uL6 (177 aa).

This sequence belongs to the universal ribosomal protein uL6 family. In terms of assembly, part of the 50S ribosomal subunit.

Its function is as follows. This protein binds to the 23S rRNA, and is important in its secondary structure. It is located near the subunit interface in the base of the L7/L12 stalk, and near the tRNA binding site of the peptidyltransferase center. This chain is Large ribosomal subunit protein uL6, found in Pectobacterium carotovorum subsp. carotovorum (strain PC1).